A 407-amino-acid chain; its full sequence is tRNA-specific 2-thiouridylase MnmA (407 aa).

ATP contacts are provided by residues 20 to 27 and leucine 46; that span reads AMSGGVDS. The active-site Nucleophile is the cysteine 114. Cysteine 114 and cysteine 210 are oxidised to a cystine. ATP is bound at residue glycine 138. Positions 160-162 are interaction with tRNA; that stretch reads RDQ. The Cysteine persulfide intermediate role is filled by cysteine 210.

It belongs to the MnmA/TRMU family.

The protein resides in the cytoplasm. The catalysed reaction is S-sulfanyl-L-cysteinyl-[protein] + uridine(34) in tRNA + AH2 + ATP = 2-thiouridine(34) in tRNA + L-cysteinyl-[protein] + A + AMP + diphosphate + H(+). In terms of biological role, catalyzes the 2-thiolation of uridine at the wobble position (U34) of tRNA, leading to the formation of s(2)U34. This chain is tRNA-specific 2-thiouridylase MnmA, found in Bartonella tribocorum (strain CIP 105476 / IBS 506).